Consider the following 199-residue polypeptide: NAD(P)H dehydrogenase (quinone) (199 aa).

Positions valine 4–isoleucine 190 constitute a Flavodoxin-like domain. FMN-binding positions include serine 10–isoleucine 15 and threonine 78–phenylalanine 80. Tyrosine 12 is a binding site for NAD(+). Tryptophan 98 contributes to the substrate binding site. FMN-binding positions include serine 113–glycine 119 and histidine 134.

This sequence belongs to the WrbA family. It depends on FMN as a cofactor.

It catalyses the reaction a quinone + NADH + H(+) = a quinol + NAD(+). The enzyme catalyses a quinone + NADPH + H(+) = a quinol + NADP(+). This is NAD(P)H dehydrogenase (quinone) from Rhodopseudomonas palustris (strain TIE-1).